The following is a 603-amino-acid chain: uncharacterized protein (603 aa).

The 93-residue stretch at 1–93 folds into the PE domain; that stretch reads MSFVIAAPET…AGAYASAEAA (93 aa).

This sequence belongs to the mycobacterial PE family. PGRS subfamily.

This is an uncharacterized protein from Mycobacterium tuberculosis (strain ATCC 25618 / H37Rv).